The following is a 93-amino-acid chain: Large ribosomal subunit protein uL23 (93 aa).

It belongs to the universal ribosomal protein uL23 family. Part of the 50S ribosomal subunit. Contacts protein L29, and trigger factor when it is bound to the ribosome.

Its function is as follows. One of the early assembly proteins it binds 23S rRNA. One of the proteins that surrounds the polypeptide exit tunnel on the outside of the ribosome. Forms the main docking site for trigger factor binding to the ribosome. This is Large ribosomal subunit protein uL23 from Nautilia profundicola (strain ATCC BAA-1463 / DSM 18972 / AmH).